A 393-amino-acid polypeptide reads, in one-letter code: Phosphoglycerate kinase (393 aa).

Residues 21 to 23 (DFN), arginine 37, 60 to 63 (HLGR), arginine 119, and arginine 152 contribute to the substrate site. ATP contacts are provided by residues lysine 202, glycine 291, glutamate 322, and 348 to 351 (GGDT).

The protein belongs to the phosphoglycerate kinase family. As to quaternary structure, monomer.

The protein resides in the cytoplasm. It catalyses the reaction (2R)-3-phosphoglycerate + ATP = (2R)-3-phospho-glyceroyl phosphate + ADP. It functions in the pathway carbohydrate degradation; glycolysis; pyruvate from D-glyceraldehyde 3-phosphate: step 2/5. The protein is Phosphoglycerate kinase of Coprothermobacter proteolyticus (strain ATCC 35245 / DSM 5265 / OCM 4 / BT).